We begin with the raw amino-acid sequence, 659 residues long: UvrABC system protein B (659 aa).

In terms of domain architecture, Helicase ATP-binding spans 25–182 (QSIENGNRGQ…KKLIEIQYER (158 aa)). Residue 38 to 45 (GVTGSGKT) participates in ATP binding. Positions 91 to 114 (YYDYYQPEAYVPQTDTFIEKDASI) match the Beta-hairpin motif. The Helicase C-terminal domain maps to 429–582 (QIDDLYGEIQ…QMEYNEEHNI (154 aa)). Positions 622-657 (EKLIEQYEEEMKEAAKNLQFERAAELRDIIKDLKEN) constitute a UVR domain.

It belongs to the UvrB family. Forms a heterotetramer with UvrA during the search for lesions. Interacts with UvrC in an incision complex.

The protein localises to the cytoplasm. In terms of biological role, the UvrABC repair system catalyzes the recognition and processing of DNA lesions. A damage recognition complex composed of 2 UvrA and 2 UvrB subunits scans DNA for abnormalities. Upon binding of the UvrA(2)B(2) complex to a putative damaged site, the DNA wraps around one UvrB monomer. DNA wrap is dependent on ATP binding by UvrB and probably causes local melting of the DNA helix, facilitating insertion of UvrB beta-hairpin between the DNA strands. Then UvrB probes one DNA strand for the presence of a lesion. If a lesion is found the UvrA subunits dissociate and the UvrB-DNA preincision complex is formed. This complex is subsequently bound by UvrC and the second UvrB is released. If no lesion is found, the DNA wraps around the other UvrB subunit that will check the other stand for damage. This chain is UvrABC system protein B, found in Clostridium perfringens (strain ATCC 13124 / DSM 756 / JCM 1290 / NCIMB 6125 / NCTC 8237 / Type A).